The chain runs to 479 residues: Lactaldehyde dehydrogenase (479 aa).

Position 150 (Leu-150) interacts with NAD(+). Arg-161 is a binding site for (S)-lactate. Residues 176-179 (KPSE), Gln-214, and Ser-230 contribute to the NAD(+) site. Glu-251 serves as a coordination point for (S)-lactate. Catalysis depends on residues Glu-251 and Cys-285. (S)-lactate is bound at residue Asn-286. Arg-336 is an NAD(+) binding site. The (S)-lactate site is built by Glu-443 and His-449.

It belongs to the aldehyde dehydrogenase family. As to quaternary structure, homotetramer.

The catalysed reaction is (S)-lactaldehyde + NAD(+) + H2O = (S)-lactate + NADH + 2 H(+). It catalyses the reaction glycolaldehyde + NAD(+) + H2O = glycolate + NADH + 2 H(+). It participates in carbohydrate degradation; L-fucose degradation. The protein operates within carbohydrate degradation; L-rhamnose degradation. Substrate inhibition is very strong with lactaldehyde, diminishing progressively with glycolaldehyde, glyceraldehyde or methylglyoxal. Inhibited by p-hydroxy mercuribenzoate and by some cations, including Mn(2+), Ca(2+), Cu(2+) and Zn(2+). Inhibited by NADH. Its function is as follows. Catalyzes the irreversible oxidation of L-lactaldehyde to L-lactate. Also shows high activity with glycolaldehyde and L-glyceraldehyde. Has weaker activity with various aldehydes such as methylglyoxal, propionaldehyde or benzaldehyde. Involved in the degradation of lactaldehyde produced during metabolism of L-fucose and L-rhamnose. It may be involved in several other metabolic pathways. This Escherichia coli (strain K12) protein is Lactaldehyde dehydrogenase (aldA).